Consider the following 342-residue polypeptide: Sideroflexin-5 (342 aa).

Over residues 1-24 the composition is skewed to low complexity; sequence MADTATTASAASAAASASNASSDA. The interval 1–29 is disordered; it reads MADTATTASAASAAASASNASSDAPPFQL. 4 helical membrane-spanning segments follow: residues 105–125, 165–185, 256–276, and 289–309; these read IFMP…VVGL, FIQG…GLNV, LTRV…MSML, and LLPV…PLAI.

This sequence belongs to the sideroflexin family. Specifically expressed in the brain.

The protein localises to the mitochondrion inner membrane. It carries out the reaction citrate(in) = citrate(out). Mitochondrial amino-acid transporter. Transports citrate. Does not act as a serine transporter: not able to mediate transport of serine into mitochondria. In brown adipose tissue, plays a role in the regulation of UCP1-dependent thermogenesis probably by supporting mitochondrial glycerol-3-phosphate utilization. The chain is Sideroflexin-5 from Rattus norvegicus (Rat).